A 218-amino-acid polypeptide reads, in one-letter code: Small ribosomal subunit protein mS34 (218 aa).

The tract at residues 180-218 is disordered; it reads KNGDTSTEEPMLNVQRIRMEPWDYPAKQEDKGRAKGTPV. The span at 196–212 shows a compositional bias: basic and acidic residues; that stretch reads IRMEPWDYPAKQEDKGR.

It belongs to the mitochondrion-specific ribosomal protein mS34 family. In terms of assembly, component of the mitochondrial small ribosomal subunit (mt-SSU). Mature mammalian 55S mitochondrial ribosomes consist of a small (28S) and a large (39S) subunit. The 28S small subunit contains a 12S ribosomal RNA (12S mt-rRNA) and 30 different proteins. The 39S large subunit contains a 16S rRNA (16S mt-rRNA), a copy of mitochondrial valine transfer RNA (mt-tRNA(Val)), which plays an integral structural role, and 52 different proteins.

Its subcellular location is the mitochondrion. Its function is as follows. Required for mitochondrial translation, plays a role in maintaining the stability of the small ribosomal subunit and the 12S rRNA that are required for mitoribosome formation. The sequence is that of Small ribosomal subunit protein mS34 (MRPS34) from Homo sapiens (Human).